The primary structure comprises 574 residues: Ankyrin repeat protein B18 (574 aa).

ANK repeat units lie at residues 56 to 87 (TGYT…NVTM), 135 to 164 (IKSR…DPNF), 167 to 213 (DGYT…NLNA), 217 to 249 (CGNT…NFKI), 253 to 285 (HGLT…NVGE), and 327 to 356 (EGKT…DINA). The 34-residue stretch at 541-574 (NCLLTLLPSEIIYEILYMLTINDLYNISYPPTKV) folds into the F-box domain.

The polypeptide is Ankyrin repeat protein B18 (Homo sapiens (Human)).